A 500-amino-acid chain; its full sequence is Endothelial lipase (500 aa).

The first 20 residues, 1–20 (MSNSVPLLCFWSLCYCFAAG), serve as a signal peptide directing secretion. Cysteines 64 and 77 form a disulfide. 2 N-linked (GlcNAc...) asparagine glycosylation sites follow: asparagine 80 and asparagine 136. Catalysis depends on serine 169, which acts as the Nucleophile. The Charge relay system role is filled by aspartate 193. An intrachain disulfide couples cysteine 252 to cysteine 272. Histidine 274 serves as the catalytic Charge relay system. 2 cysteine pairs are disulfide-bonded: cysteine 297–cysteine 316 and cysteine 308–cysteine 311. 325–337 (KMRNKRNSKMYLK) is a binding site for heparin. Residues 347 to 482 (YHYQMKIHVF…SPGRELWFRK (136 aa)) form the PLAT domain. N-linked (GlcNAc...) asparagine glycosylation is found at asparagine 393, asparagine 469, and asparagine 491. Residues cysteine 463 and cysteine 483 are joined by a disulfide bond.

It belongs to the AB hydrolase superfamily. Lipase family. As to quaternary structure, head to tail homodimer. As to expression, high level of expression in the liver, placenta, lung, thyroid, kidney, testis and in the corpus luteum of the ovary. Expressed also in coronary artery endothelial cells, umbilical vein endothelial cells and in hepatocytes and osteosarcoma cell lines. Not detected in heart, brain and muscle.

It is found in the secreted. The enzyme catalyses a triacylglycerol + H2O = a diacylglycerol + a fatty acid + H(+). The catalysed reaction is a 1,2-diacyl-sn-glycero-3-phosphocholine + H2O = a 2-acyl-sn-glycero-3-phosphocholine + a fatty acid + H(+). It catalyses the reaction 1,2,3-tri-(9Z-octadecenoyl)-glycerol + H2O = di-(9Z)-octadecenoylglycerol + (9Z)-octadecenoate + H(+). It carries out the reaction 1,2,3-tributanoylglycerol + H2O = dibutanoylglycerol + butanoate + H(+). The enzyme catalyses 1,2-dihexadecanoyl-sn-glycero-3-phosphocholine + H2O = hexadecanoyl-sn-glycero-3-phosphocholine + hexadecanoate + H(+). Its activity is regulated as follows. Inhibited by serum and NaCl. Its function is as follows. Exerts both phospholipase and triglyceride lipase activities. More active as a phospholipase than a triglyceride lipase. Hydrolyzes triglycerides, both with short-chain fatty acyl groups (tributyrin) and long-chain fatty acyl groups (triolein) with similar levels of activity toward both types of substrates. Hydrolyzes high density lipoproteins (HDL) more efficiently than other lipoproteins. The polypeptide is Endothelial lipase (LIPG) (Homo sapiens (Human)).